We begin with the raw amino-acid sequence, 422 residues long: Oxysterol-binding protein 7 (422 aa).

The disordered stretch occupies residues 283-313 (EAAPASSASKKEKKKEKKKAKHSKHTCSPSD). The span at 293-307 (KEKKKEKKKAKHSKH) shows a compositional bias: basic residues. Residues 354 to 384 (MQAADQIKKEIEDEQRKRLQITKEEEKKERA) are a coiled coil. Residues 402–422 (TLAPVSNSTSSTASDAASGSN) are disordered. The span at 407–422 (SNSTSSTASDAASGSN) shows a compositional bias: low complexity.

It belongs to the OSBP family.

This is Oxysterol-binding protein 7 (osbG) from Dictyostelium discoideum (Social amoeba).